The following is a 381-amino-acid chain: Probable envelope ADP,ATP carrier protein, chloroplastic (381 aa).

The transit peptide at 1–26 (MEEDRAILTFHRIPSLNSSLITTSSP) directs the protein to the chloroplast. The next 5 membrane-spanning stretches (helical) occupy residues 78–98 (LAIL…ALAG), 154–179 (LPQV…NLFK), 191–211 (LAAG…LDVL), 237–257 (IASF…YIAV), and 281–301 (LLTA…LDTV). 3 Solcar repeats span residues 85 to 177 (PKDA…YKNL), 185 to 268 (LSVI…VKKS), and 279 to 359 (SSLL…VKRL). R159 lines the ADP pocket. Residue R302 coordinates ADP. A helical membrane pass occupies residues 334-360 (GFLPNALKTLPNSSIRLTTFDMVKRLI).

This sequence belongs to the mitochondrial carrier (TC 2.A.29) family.

The protein resides in the plastid. The protein localises to the chloroplast membrane. Transports adenine nucleotides. This is Probable envelope ADP,ATP carrier protein, chloroplastic (EAAC) from Arabidopsis thaliana (Mouse-ear cress).